The chain runs to 199 residues: Holliday junction branch migration complex subunit RuvA (199 aa).

Residues 1–63 (MIGCLIGEVF…EDAQQLYGFS (63 aa)) are domain I. Residues 64 to 142 (DAQEKTIFRT…TLAQGTSSAA (79 aa)) form a domain II region. The segment at 143–150 (ALPQIQFV) is flexible linker. Residues 150 to 199 (VSNSPVAEAEAALQSLGYKPLEAQKAVAAVKADYTESADIIRAALKSMMK) are domain III.

Belongs to the RuvA family. Homotetramer. Forms an RuvA(8)-RuvB(12)-Holliday junction (HJ) complex. HJ DNA is sandwiched between 2 RuvA tetramers; dsDNA enters through RuvA and exits via RuvB. An RuvB hexamer assembles on each DNA strand where it exits the tetramer. Each RuvB hexamer is contacted by two RuvA subunits (via domain III) on 2 adjacent RuvB subunits; this complex drives branch migration. In the full resolvosome a probable DNA-RuvA(4)-RuvB(12)-RuvC(2) complex forms which resolves the HJ.

Its subcellular location is the cytoplasm. The RuvA-RuvB-RuvC complex processes Holliday junction (HJ) DNA during genetic recombination and DNA repair, while the RuvA-RuvB complex plays an important role in the rescue of blocked DNA replication forks via replication fork reversal (RFR). RuvA specifically binds to HJ cruciform DNA, conferring on it an open structure. The RuvB hexamer acts as an ATP-dependent pump, pulling dsDNA into and through the RuvAB complex. HJ branch migration allows RuvC to scan DNA until it finds its consensus sequence, where it cleaves and resolves the cruciform DNA. The sequence is that of Holliday junction branch migration complex subunit RuvA from Acinetobacter baumannii (strain ACICU).